A 434-amino-acid chain; its full sequence is Arginine/serine-rich coiled-coil protein 2 (434 aa).

Basic and acidic residues predominate over residues 1 to 27; the sequence is MAASDTERDGLAPEKTSPDRDKKKEQS. Positions 1-230 are disordered; the sequence is MAASDTERDG…PSPPPFRGRN (230 aa). Ala2 is subject to N-acetylalanine. Ser4 carries the post-translational modification Phosphoserine. 2 positions are modified to phosphothreonine: Thr6 and Thr16. Phosphoserine occurs at positions 17, 30, and 32. Residues 35–51 show a composition bias toward basic residues; that stretch reads ASKHHYSRSRSRSRERK. Basic and acidic residues predominate over residues 66-111; the sequence is RSKEGRRHESKDKSSKKHKSEEHNDKEHSSDKGRERLNSSENGEDR. Ser104 carries the phosphoserine modification. Residues 112 to 214 show a composition bias toward basic residues; it reads HKRKERKSSR…KRIEKPRRFS (103 aa). Residues 230 to 270 adopt a coiled-coil conformation; sequence NTAMDAQEALARRLERAKKLQEQREKEMVEKQKQQEIAAAA. Lys375 participates in a covalent cross-link: Glycyl lysine isopeptide (Lys-Gly) (interchain with G-Cter in SUMO1); alternate. Lys375 participates in a covalent cross-link: Glycyl lysine isopeptide (Lys-Gly) (interchain with G-Cter in SUMO2); alternate. Ser376 carries the post-translational modification Phosphoserine.

Belongs to the RSRC2 family.

In Homo sapiens (Human), this protein is Arginine/serine-rich coiled-coil protein 2 (RSRC2).